The sequence spans 366 residues: Arfaptin-1 (366 aa).

A disordered region spans residues 1–78 (MAEESPKNSA…SSAPPLPCVL (78 aa)). Alanine 2 carries the post-translational modification N-acetylalanine. Serine 5 carries the post-translational modification Phosphoserine. A compositionally biased stretch (basic and acidic residues) spans 22–35 (GDAHEHGYNRDLKH). Residues serine 36 and serine 39 each carry the phosphoserine modification. A compositionally biased stretch (polar residues) spans 44-53 (SETQITSHGF). Phosphoserine occurs at positions 69, 79, and 125. An AH domain is found at 146–346 (TVDLELEAQI…NQKQLEQTLK (201 aa)). The residue at position 354 (threonine 354) is a Phosphothreonine.

As to quaternary structure, forms homodimers or heterodimers with ARFIP2. Interacts with non-myristoylated GTP-bound ARF3, but not to GDP-bound ARF3. Interacts with ARF1. Binds with lower affinity to ARF5 and with very little affinity to ARF6. Interacts with ARL1. Interacts with ATG9A.

It localises to the golgi apparatus. Its subcellular location is the trans-Golgi network membrane. Plays a role in controlling biogenesis of secretory granules at the trans-Golgi network. Mechanistically, binds ARF-GTP at the neck of a growing secretory granule precursor and forms a protective scaffold. Once the granule precursor has been completely loaded, active PRKD1 phosphorylates ARFIP1 and releases it from ARFs. In turn, ARFs induce fission. Through this mechanism, ensures proper secretory granule formation at the Golgi of pancreatic beta cells. This Rattus norvegicus (Rat) protein is Arfaptin-1.